The chain runs to 497 residues: Cytosol aminopeptidase (497 aa).

2 residues coordinate Mn(2+): lysine 267 and aspartate 272. Lysine 279 is a catalytic residue. The Mn(2+) site is built by aspartate 290, aspartate 349, and glutamate 351. Residue arginine 353 is part of the active site.

It belongs to the peptidase M17 family. The cofactor is Mn(2+).

The protein resides in the cytoplasm. It catalyses the reaction Release of an N-terminal amino acid, Xaa-|-Yaa-, in which Xaa is preferably Leu, but may be other amino acids including Pro although not Arg or Lys, and Yaa may be Pro. Amino acid amides and methyl esters are also readily hydrolyzed, but rates on arylamides are exceedingly low.. It carries out the reaction Release of an N-terminal amino acid, preferentially leucine, but not glutamic or aspartic acids.. Its function is as follows. Presumably involved in the processing and regular turnover of intracellular proteins. Catalyzes the removal of unsubstituted N-terminal amino acids from various peptides. This is Cytosol aminopeptidase (pepA) from Pseudomonas putida (Arthrobacter siderocapsulatus).